The primary structure comprises 360 residues: Photosystem II protein D1 (360 aa).

Helical transmembrane passes span Tyr32–Phe49, His121–Leu136, and Trp145–Ala159. Residue His121 coordinates chlorophyll a. Tyr129 contacts pheophytin a. 2 residues coordinate [CaMn4O5] cluster: Asp173 and Glu192. A helical transmembrane segment spans residues Leu200–Leu221. His201 contacts chlorophyll a. A quinone contacts are provided by residues His218 and Ser267–Phe268. A Fe cation-binding site is contributed by His218. His275 is a binding site for Fe cation. Residues Phe277–Met291 traverse the membrane as a helical segment. 4 residues coordinate [CaMn4O5] cluster: His335, Glu336, Asp345, and Ala347. Positions Cys348 to Gly360 are excised as a propeptide.

It belongs to the reaction center PufL/M/PsbA/D family. In terms of assembly, PSII is composed of 1 copy each of membrane proteins PsbA, PsbB, PsbC, PsbD, PsbE, PsbF, PsbH, PsbI, PsbJ, PsbK, PsbL, PsbM, PsbT, PsbX, PsbY, PsbZ, Psb30/Ycf12, at least 3 peripheral proteins of the oxygen-evolving complex and a large number of cofactors. It forms dimeric complexes. Requires The D1/D2 heterodimer binds P680, chlorophylls that are the primary electron donor of PSII, and subsequent electron acceptors. It shares a non-heme iron and each subunit binds pheophytin, quinone, additional chlorophylls, carotenoids and lipids. D1 provides most of the ligands for the Mn4-Ca-O5 cluster of the oxygen-evolving complex (OEC). There is also a Cl(-1) ion associated with D1 and D2, which is required for oxygen evolution. The PSII complex binds additional chlorophylls, carotenoids and specific lipids. as cofactor. In terms of processing, tyr-164 forms a radical intermediate that is referred to as redox-active TyrZ, YZ or Y-Z. Post-translationally, C-terminally processed by CtpA; processing is essential to allow assembly of the oxygen-evolving complex and thus photosynthetic growth.

It localises to the plastid. The protein resides in the chloroplast thylakoid membrane. The catalysed reaction is 2 a plastoquinone + 4 hnu + 2 H2O = 2 a plastoquinol + O2. Its function is as follows. Photosystem II (PSII) is a light-driven water:plastoquinone oxidoreductase that uses light energy to abstract electrons from H(2)O, generating O(2) and a proton gradient subsequently used for ATP formation. It consists of a core antenna complex that captures photons, and an electron transfer chain that converts photonic excitation into a charge separation. The D1/D2 (PsbA/PsbD) reaction center heterodimer binds P680, the primary electron donor of PSII as well as several subsequent electron acceptors. This Karenia mikimotoi (Red tide dinoflagellate) protein is Photosystem II protein D1.